Here is an 81-residue protein sequence, read N- to C-terminus: Control protein C.BamHI (81 aa).

The region spanning 13-68 (VRQIRLSKSNMSQEKLAFECDLHRTYISDIERGTRNVSLDNIEKISKALGVQPKDL) is the HTH cro/C1-type domain. Residues 25 to 44 (QEKLAFECDLHRTYISDIER) constitute a DNA-binding region (H-T-H motif).

Its function is as follows. May help modulate methylase (M) and restriction enzyme (R) expression as cells undergo physiological changes such as sporulation or transformation. The protein is Control protein C.BamHI of Bacillus amyloliquefaciens (Bacillus velezensis).